The chain runs to 2376 residues: MAG2-interacting protein 2 (2376 aa).

As to quaternary structure, forms a complex with MAG2, ZW10/MIP1 and MIP3 on the endoplasmic reticulum.

It localises to the endoplasmic reticulum membrane. Required for proper maturation of seed storage proteins. Forms a complex with MAG2, ZW10/MIP1 and MIP3 on the endoplasmic reticulum that may be responsible for efficient transport of seed storage proteins. This Arabidopsis thaliana (Mouse-ear cress) protein is MAG2-interacting protein 2.